We begin with the raw amino-acid sequence, 360 residues long: Pyrimidine monooxygenase RutA (360 aa).

FMN is bound by residues 49 to 50, Asn115, Glu124, 140 to 141, and Ser190; these read IK and RY.

This sequence belongs to the NtaA/SnaA/DszA monooxygenase family. RutA subfamily.

The catalysed reaction is uracil + FMNH2 + NADH + O2 = (Z)-3-ureidoacrylate + FMN + NAD(+) + H2O + H(+). The enzyme catalyses thymine + FMNH2 + NADH + O2 = (Z)-2-methylureidoacrylate + FMN + NAD(+) + H2O + H(+). In terms of biological role, catalyzes the pyrimidine ring opening between N-3 and C-4 by an unusual flavin hydroperoxide-catalyzed mechanism, adding oxygen atoms in the process to yield ureidoacrylate peracid, that immediately reacts with FMN forming ureidoacrylate and FMN-N(5)-oxide. The FMN-N(5)-oxide reacts spontaneously with NADH to produce FMN. Requires the flavin reductase RutF to regenerate FMN in vivo. The protein is Pyrimidine monooxygenase RutA of Pseudomonas savastanoi pv. phaseolicola (strain 1448A / Race 6) (Pseudomonas syringae pv. phaseolicola (strain 1448A / Race 6)).